The chain runs to 172 residues: Adenine phosphoribosyltransferase (172 aa).

The protein belongs to the purine/pyrimidine phosphoribosyltransferase family. In terms of assembly, homodimer.

Its subcellular location is the cytoplasm. It carries out the reaction AMP + diphosphate = 5-phospho-alpha-D-ribose 1-diphosphate + adenine. It functions in the pathway purine metabolism; AMP biosynthesis via salvage pathway; AMP from adenine: step 1/1. Its function is as follows. Catalyzes a salvage reaction resulting in the formation of AMP, that is energically less costly than de novo synthesis. The protein is Adenine phosphoribosyltransferase of Hydrogenovibrio crunogenus (strain DSM 25203 / XCL-2) (Thiomicrospira crunogena).